The chain runs to 217 residues: Redox-sensing transcriptional repressor Rex (217 aa).

A DNA-binding region (H-T-H motif) is located at residues 17 to 56 (RYLRYVEDLLNHDVLRISSSELSQRMGYTASQVRQDFNNF). NAD(+) is bound at residue 91–96 (GVGNLG).

This sequence belongs to the transcriptional regulatory Rex family. Homodimer.

Its subcellular location is the cytoplasm. Functionally, modulates transcription in response to changes in cellular NADH/NAD(+) redox state. The polypeptide is Redox-sensing transcriptional repressor Rex (Caldicellulosiruptor bescii (strain ATCC BAA-1888 / DSM 6725 / KCTC 15123 / Z-1320) (Anaerocellum thermophilum)).